Here is a 396-residue protein sequence, read N- to C-terminus: Serine/threonine-protein kinase 32A (396 aa).

Residue glycine 2 is the site of N-myristoyl glycine attachment. Residues 23–281 (FEILRAIGKG…LSDVQNFPYM (259 aa)) form the Protein kinase domain. ATP-binding positions include 29–37 (IGKGSFGKV) and lysine 52. Aspartate 146 functions as the Proton acceptor in the catalytic mechanism. Residues 373 to 396 (KRQPNLALEQTKDPQGEDGQNNNL) form a disordered region.

It belongs to the protein kinase superfamily. Ser/Thr protein kinase family. The cofactor is Mg(2+).

It is found in the cell membrane. The enzyme catalyses L-seryl-[protein] + ATP = O-phospho-L-seryl-[protein] + ADP + H(+). It catalyses the reaction L-threonyl-[protein] + ATP = O-phospho-L-threonyl-[protein] + ADP + H(+). The sequence is that of Serine/threonine-protein kinase 32A (STK32A) from Homo sapiens (Human).